The following is a 126-amino-acid chain: MTDLREKKRIAFFRGHSAERLAAFALMLKGFRIVARRYRTRLGEIDLIARRGDLVLIVEVKARASFEAAQFAVTPQAMRRIEAAADLWLQRQTDRARLSLRFDMVAVLPRRWPKHVPAFFTAGHYG.

This sequence belongs to the UPF0102 family.

This chain is UPF0102 protein BCAN_A0183, found in Brucella canis (strain ATCC 23365 / NCTC 10854 / RM-666).